A 73-amino-acid polypeptide reads, in one-letter code: Potassium channel toxin alpha-KTx 27.1 (73 aa).

The signal sequence occupies residues 1-23; that stretch reads MKFLFLTLFVCCFIAVLVIPSEA.

Belongs to the short scorpion toxin superfamily. Potassium channel inhibitor family. Alpha-KTx 27 subfamily. In terms of processing, contains 4 disulfide bonds. Expressed by the venom gland.

It localises to the secreted. The polypeptide is Potassium channel toxin alpha-KTx 27.1 (Buthus israelis (Israeli scorpion)).